We begin with the raw amino-acid sequence, 201 residues long: 3-isopropylmalate dehydratase small subunit (201 aa).

This sequence belongs to the LeuD family. LeuD type 1 subfamily. Heterodimer of LeuC and LeuD.

The enzyme catalyses (2R,3S)-3-isopropylmalate = (2S)-2-isopropylmalate. The protein operates within amino-acid biosynthesis; L-leucine biosynthesis; L-leucine from 3-methyl-2-oxobutanoate: step 2/4. Catalyzes the isomerization between 2-isopropylmalate and 3-isopropylmalate, via the formation of 2-isopropylmaleate. The chain is 3-isopropylmalate dehydratase small subunit from Brucella anthropi (strain ATCC 49188 / DSM 6882 / CCUG 24695 / JCM 21032 / LMG 3331 / NBRC 15819 / NCTC 12168 / Alc 37) (Ochrobactrum anthropi).